A 265-amino-acid polypeptide reads, in one-letter code: Shikimate dehydrogenase (NADP(+)) (265 aa).

Shikimate-binding positions include 15-17 and Thr62; that span reads SLS. Lys66 (proton acceptor) is an active-site residue. Residues Asn87 and Asp102 each coordinate shikimate. Residues 125-129, 149-154, and Leu209 contribute to the NADP(+) site; these read GAGGA and NRTLEK. Tyr211 is a binding site for shikimate. Gly233 serves as a coordination point for NADP(+).

This sequence belongs to the shikimate dehydrogenase family. As to quaternary structure, homodimer.

The enzyme catalyses shikimate + NADP(+) = 3-dehydroshikimate + NADPH + H(+). It functions in the pathway metabolic intermediate biosynthesis; chorismate biosynthesis; chorismate from D-erythrose 4-phosphate and phosphoenolpyruvate: step 4/7. Involved in the biosynthesis of the chorismate, which leads to the biosynthesis of aromatic amino acids. Catalyzes the reversible NADPH linked reduction of 3-dehydroshikimate (DHSA) to yield shikimate (SA). This Legionella pneumophila (strain Corby) protein is Shikimate dehydrogenase (NADP(+)).